The following is a 96-amino-acid chain: MTKSELIEILARKQSHLAYKDVELSVKTMLEHLSQALATGDRIEIRGFGSFSLHFRPPRVGRNPKTGETVSLPGKYVPHFKPGKELRERVNAVHEQ.

The disordered stretch occupies residues 59 to 78 (RVGRNPKTGETVSLPGKYVP).

This sequence belongs to the bacterial histone-like protein family. As to quaternary structure, heterodimer of an alpha and a beta chain.

Its function is as follows. This protein is one of the two subunits of integration host factor, a specific DNA-binding protein that functions in genetic recombination as well as in transcriptional and translational control. The protein is Integration host factor subunit beta of Thioalkalivibrio sulfidiphilus (strain HL-EbGR7).